Reading from the N-terminus, the 365-residue chain is tRNA(Met) cytidine acetate ligase (365 aa).

ATP-binding positions include 7–20, Gly96, Asn152, and Arg175; that span reads IAEFNPFHNGHKYL.

This sequence belongs to the TmcAL family.

It is found in the cytoplasm. It catalyses the reaction cytidine(34) in elongator tRNA(Met) + acetate + ATP = N(4)-acetylcytidine(34) in elongator tRNA(Met) + AMP + diphosphate. In terms of biological role, catalyzes the formation of N(4)-acetylcytidine (ac(4)C) at the wobble position of elongator tRNA(Met), using acetate and ATP as substrates. First activates an acetate ion to form acetyladenylate (Ac-AMP) and then transfers the acetyl group to tRNA to form ac(4)C34. The protein is tRNA(Met) cytidine acetate ligase of Streptococcus pneumoniae (strain JJA).